Reading from the N-terminus, the 489-residue chain is Mitochondrial distribution and morphology protein 10 (489 aa).

The protein belongs to the MDM10 family. In terms of assembly, component of the ER-mitochondria encounter structure (ERMES) or MDM complex, composed of MMM1, MDM10, MDM12 and MDM34. Associates with the mitochondrial outer membrane sorting assembly machinery SAM(core) complex.

Its subcellular location is the mitochondrion outer membrane. In terms of biological role, component of the ERMES/MDM complex, which serves as a molecular tether to connect the endoplasmic reticulum and mitochondria. Components of this complex are involved in the control of mitochondrial shape and protein biogenesis and may function in phospholipid exchange. MDM10 is involved in the late assembly steps of the general translocase of the mitochondrial outer membrane (TOM complex). Functions in the TOM40-specific route of the assembly of outer membrane beta-barrel proteins, including the association of TOM40 with the receptor TOM22 and small TOM proteins. Can associate with the SAM(core) complex as well as the MDM12-MMM1 complex, both involved in late steps of the major beta-barrel assembly pathway, that is responsible for biogenesis of all outer membrane beta-barrel proteins. May act as a switch that shuttles between both complexes and channels precursor proteins into the TOM40-specific pathway. Plays a role in mitochondrial morphology and in the inheritance of mitochondria. The chain is Mitochondrial distribution and morphology protein 10 from Arthroderma otae (strain ATCC MYA-4605 / CBS 113480) (Microsporum canis).